Here is a 391-residue protein sequence, read N- to C-terminus: Phosphoglycerate kinase (391 aa).

Residues 21-23, Arg36, 59-62, Arg113, and Arg146 each bind substrate; these read DFN and HLGR. ATP contacts are provided by residues Lys197, Glu319, and 345–348; that span reads GGDT.

It belongs to the phosphoglycerate kinase family. Monomer.

It is found in the cytoplasm. It catalyses the reaction (2R)-3-phosphoglycerate + ATP = (2R)-3-phospho-glyceroyl phosphate + ADP. Its pathway is carbohydrate degradation; glycolysis; pyruvate from D-glyceraldehyde 3-phosphate: step 2/5. The polypeptide is Phosphoglycerate kinase (Methylococcus capsulatus (strain ATCC 33009 / NCIMB 11132 / Bath)).